The primary structure comprises 438 residues: Cysteine--tRNA ligase (438 aa).

Cys-28 is a Zn(2+) binding site. Positions 30–40 match the 'HIGH' region motif; sequence PTVYNHLHLGN. Zn(2+) is bound by residues Cys-207, His-232, and Glu-236. A 'KMSKS' region motif is present at residues 264-268; the sequence is KMSKS. Lys-267 contributes to the ATP binding site.

Belongs to the class-I aminoacyl-tRNA synthetase family. Monomer. Zn(2+) serves as cofactor.

The protein localises to the cytoplasm. It catalyses the reaction tRNA(Cys) + L-cysteine + ATP = L-cysteinyl-tRNA(Cys) + AMP + diphosphate. The chain is Cysteine--tRNA ligase from Onion yellows phytoplasma (strain OY-M).